The sequence spans 89 residues: Small ribosomal subunit protein uS17 (89 aa).

It belongs to the universal ribosomal protein uS17 family. As to quaternary structure, part of the 30S ribosomal subunit.

Its function is as follows. One of the primary rRNA binding proteins, it binds specifically to the 5'-end of 16S ribosomal RNA. In Ralstonia nicotianae (strain ATCC BAA-1114 / GMI1000) (Ralstonia solanacearum), this protein is Small ribosomal subunit protein uS17.